Consider the following 207-residue polypeptide: Large ribosomal subunit protein uL4 (207 aa).

Residues 44–76 (KRRGTASAKTRSEVRGGGRKPWRQKGTGRARHG) are disordered. Residues 60–76 (GGRKPWRQKGTGRARHG) show a composition bias toward basic residues.

The protein belongs to the universal ribosomal protein uL4 family. Part of the 50S ribosomal subunit.

Its function is as follows. One of the primary rRNA binding proteins, this protein initially binds near the 5'-end of the 23S rRNA. It is important during the early stages of 50S assembly. It makes multiple contacts with different domains of the 23S rRNA in the assembled 50S subunit and ribosome. Functionally, forms part of the polypeptide exit tunnel. This is Large ribosomal subunit protein uL4 from Natranaerobius thermophilus (strain ATCC BAA-1301 / DSM 18059 / JW/NM-WN-LF).